The sequence spans 477 residues: Aspartyl/glutamyl-tRNA(Asn/Gln) amidotransferase subunit B (477 aa).

The protein belongs to the GatB/GatE family. GatB subfamily. As to quaternary structure, heterotrimer of A, B and C subunits.

It catalyses the reaction L-glutamyl-tRNA(Gln) + L-glutamine + ATP + H2O = L-glutaminyl-tRNA(Gln) + L-glutamate + ADP + phosphate + H(+). The enzyme catalyses L-aspartyl-tRNA(Asn) + L-glutamine + ATP + H2O = L-asparaginyl-tRNA(Asn) + L-glutamate + ADP + phosphate + 2 H(+). In terms of biological role, allows the formation of correctly charged Asn-tRNA(Asn) or Gln-tRNA(Gln) through the transamidation of misacylated Asp-tRNA(Asn) or Glu-tRNA(Gln) in organisms which lack either or both of asparaginyl-tRNA or glutaminyl-tRNA synthetases. The reaction takes place in the presence of glutamine and ATP through an activated phospho-Asp-tRNA(Asn) or phospho-Glu-tRNA(Gln). This chain is Aspartyl/glutamyl-tRNA(Asn/Gln) amidotransferase subunit B, found in Streptococcus gordonii (strain Challis / ATCC 35105 / BCRC 15272 / CH1 / DL1 / V288).